We begin with the raw amino-acid sequence, 69 residues long: Sec-independent protein translocase protein TatA (69 aa).

Residues methionine 1–glycine 21 form a helical membrane-spanning segment. The disordered stretch occupies residues lysine 41–lysine 69. Residues threonine 60 to lysine 69 are compositionally biased toward basic and acidic residues.

It belongs to the TatA/E family. The Tat system comprises two distinct complexes: a TatABC complex, containing multiple copies of TatA, TatB and TatC subunits, and a separate TatA complex, containing only TatA subunits. Substrates initially bind to the TatABC complex, which probably triggers association of the separate TatA complex to form the active translocon.

It localises to the cell inner membrane. Its function is as follows. Part of the twin-arginine translocation (Tat) system that transports large folded proteins containing a characteristic twin-arginine motif in their signal peptide across membranes. TatA could form the protein-conducting channel of the Tat system. The chain is Sec-independent protein translocase protein TatA from Rhizobium rhizogenes (strain K84 / ATCC BAA-868) (Agrobacterium radiobacter).